A 240-amino-acid chain; its full sequence is Adenylate dimethylallyltransferase (240 aa).

The protein belongs to the isopentenyl transferase family.

The catalysed reaction is dimethylallyl diphosphate + AMP = N(6)-(dimethylallyl)adenosine 5'-phosphate + diphosphate. Its function is as follows. Transfers dimethylallyl groups to AMP as part of the biosynthesis of cytokinin phytohormones. This is Adenylate dimethylallyltransferase (izt) from Agrobacterium fabrum (strain C58 / ATCC 33970) (Agrobacterium tumefaciens (strain C58)).